Consider the following 718-residue polypeptide: Putative proline-rich receptor-like protein kinase PERK11 (718 aa).

The disordered stretch occupies residues 1 to 256; sequence MDKVQQQADL…GGTSQQSNES (256 aa). Residues 1–262 lie on the Extracellular side of the membrane; the sequence is MDKVQQQADL…SNESNYTEKT (262 aa). Pro residues-rich tracts occupy residues 45–105, 115–132, and 157–167; these read ATSP…PPQS, IPFPKPQLPPPSLFPPPS, and LPSPPSTPFSP. Low complexity-rich tracts occupy residues 168 to 203 and 211 to 244; these read PSQENSGSQGSPPLSSLLPPMLPLNPNSPGNPLQPL and SNRVPSSSSSPSPPSLSGSNNHSGGSNRHNANSN. 3 N-linked (GlcNAc...) asparagine glycosylation sites follow: Asn-231, Asn-254, and Asn-257. The helical transmembrane segment at 263–283 threads the bilayer; sequence VIGIGIAGVLVILFIAGVFFV. Residues 284 to 718 lie on the Cytoplasmic side of the membrane; the sequence is RRKQKKGSSS…RAFNTSHRNH (435 aa). Positions 314–348 are disordered; it reads HYRQKPGNGNSSAQNSSPDTNSLGNPKHGRGTPDS. A compositionally biased stretch (polar residues) spans 320 to 337; it reads GNGNSSAQNSSPDTNSLG. Thr-359 carries the phosphothreonine modification. The 280-residue stretch at 370 to 649 folds into the Protein kinase domain; it reads FCKSFVVGEG…VRALDTRDDL (280 aa). Residues 376–384 and Lys-398 each bind ATP; that span reads VGEGGFGCV. A Phosphotyrosine modification is found at Tyr-443. The Proton acceptor role is filled by Asp-494. Phosphoserine is present on residues Ser-498 and Ser-527. Phosphothreonine is present on residues Thr-528 and Thr-533. Residue Tyr-541 is modified to Phosphotyrosine. A disordered region spans residues 683–718; sequence SSDLGTNTGYYPSQDYATSHEYESESRAFNTSHRNH. Composition is skewed to polar residues over residues 685–699 and 709–718; these read DLGTNTGYYPSQDYA and RAFNTSHRNH.

It belongs to the protein kinase superfamily. Ser/Thr protein kinase family. As to expression, mostly expressed in flower buds.

The protein localises to the cell membrane. The catalysed reaction is L-seryl-[protein] + ATP = O-phospho-L-seryl-[protein] + ADP + H(+). The enzyme catalyses L-threonyl-[protein] + ATP = O-phospho-L-threonyl-[protein] + ADP + H(+). The protein is Putative proline-rich receptor-like protein kinase PERK11 (PERK11) of Arabidopsis thaliana (Mouse-ear cress).